We begin with the raw amino-acid sequence, 396 residues long: Vitamin K-dependent protein Z (396 aa).

One can recognise a Gla domain in the interval 1-46; that stretch reads AGSYLLEELFEGHLEKECWEEICVYEEAREVFEDDETTDEFWRTYM. 13 positions are modified to 4-carboxyglutamate: E7, E8, E11, E15, E17, E20, E21, E26, E27, E30, E33, E36, and E40. A disulfide bridge connects residues C18 and C23. EGF-like domains lie at 47-83 and 85-126; these read GGSP…PNCA and AESE…RSCL. Intrachain disulfides connect C51/C62, C56/C71, C73/C82, C89/C101, C97/C110, C112/C125, and C169/C185. The O-linked (Glc...) serine glycan is linked to S53. N59 carries an N-linked (GlcNAc...) asparagine glycan. D64 is subject to (3R)-3-hydroxyaspartate. The Peptidase S1 domain occupies 135 to 357; that stretch reads TLGPECCQRP…YALWLRQVTQ (223 aa). Residues N191 and N289 are each glycosylated (N-linked (GlcNAc...) asparagine). A disulfide bridge connects residues C284 and C298. Residues 356–396 are disordered; that stretch reads TQQPSRASPRGDRGQGRDGEPVPGDRGGRWAPTALPPGPLV. Positions 364–375 are enriched in basic and acidic residues; that stretch reads PRGDRGQGRDGE. T388 carries an O-linked (GalNAc...) threonine glycan.

Belongs to the peptidase S1 family. In terms of processing, the iron and 2-oxoglutarate dependent 3-hydroxylation of aspartate and asparagine is (R) stereospecific within EGF domains. Plasma.

It is found in the secreted. Its function is as follows. Inhibits activity of the coagulation protease factor Xa in the presence of SERPINA10, calcium and phospholipids. Appears to assist hemostasis by binding thrombin and promoting its association with phospholipid vesicles. The protein is Vitamin K-dependent protein Z (PROZ) of Bos taurus (Bovine).